A 238-amino-acid polypeptide reads, in one-letter code: ATP synthase subunit a (238 aa).

A run of 5 helical transmembrane segments spans residues 18–38 (MSTV…TFIG), 76–96 (FIVL…LGLP), 117–137 (VLTL…GIKI), 195–215 (LIGM…GLFI), and 216–236 (GAIQ…HKVE).

It belongs to the ATPase A chain family. As to quaternary structure, F-type ATPases have 2 components, CF(1) - the catalytic core - and CF(0) - the membrane proton channel. CF(1) has five subunits: alpha(3), beta(3), gamma(1), delta(1), epsilon(1). CF(0) has three main subunits: a(1), b(2) and c(9-12). The alpha and beta chains form an alternating ring which encloses part of the gamma chain. CF(1) is attached to CF(0) by a central stalk formed by the gamma and epsilon chains, while a peripheral stalk is formed by the delta and b chains.

Its subcellular location is the cell membrane. Functionally, key component of the proton channel; it plays a direct role in the translocation of protons across the membrane. This is ATP synthase subunit a from Alkalihalophilus pseudofirmus (strain ATCC BAA-2126 / JCM 17055 / OF4) (Bacillus pseudofirmus).